Reading from the N-terminus, the 318-residue chain is MKARGFKAKMRGFKIFSGSAHPAFGKEVSKHLGFPLSKAVIGKFSDGEINIQISESVRGKDIFIIQPTCVPVNDNLMELLVMVDALRRSSANSITAVLPYFGYARQDRKAAPRVPITAKMVANLMQEVGIERIITMDLHAGQIQGFFDVPVDNLYGSIVFRDYIRSKALKNPVIASPDVGGVTRARYFANQMGLDLIIVDKRREKANESEVMNIIGSAKERDVILVDDMIDTAGTICKAALALKEQGATSVMALGTHAVLSGNAIKRIKESALDEVVVTNSIPLVQKCDKITTLSVAPLFAEVIRRIYHNESVQSLFT.

ATP is bound by residues 46 to 48 (DGE) and 105 to 106 (RQ). Mg(2+) contacts are provided by His139 and Asp178. Residue Lys201 is part of the active site. D-ribose 5-phosphate is bound by residues Arg203, Asp227, and 231 to 235 (DTAGT).

Belongs to the ribose-phosphate pyrophosphokinase family. Class I subfamily. As to quaternary structure, homohexamer. Mg(2+) is required as a cofactor.

It is found in the cytoplasm. It carries out the reaction D-ribose 5-phosphate + ATP = 5-phospho-alpha-D-ribose 1-diphosphate + AMP + H(+). The protein operates within metabolic intermediate biosynthesis; 5-phospho-alpha-D-ribose 1-diphosphate biosynthesis; 5-phospho-alpha-D-ribose 1-diphosphate from D-ribose 5-phosphate (route I): step 1/1. Functionally, involved in the biosynthesis of the central metabolite phospho-alpha-D-ribosyl-1-pyrophosphate (PRPP) via the transfer of pyrophosphoryl group from ATP to 1-hydroxyl of ribose-5-phosphate (Rib-5-P). The protein is Ribose-phosphate pyrophosphokinase of Helicobacter pylori (strain ATCC 700392 / 26695) (Campylobacter pylori).